The chain runs to 222 residues: Imidazoleglycerol-phosphate dehydratase (222 aa).

Belongs to the imidazoleglycerol-phosphate dehydratase family.

It catalyses the reaction D-erythro-1-(imidazol-4-yl)glycerol 3-phosphate = 3-(imidazol-4-yl)-2-oxopropyl phosphate + H2O. The protein operates within amino-acid biosynthesis; L-histidine biosynthesis; L-histidine from 5-phospho-alpha-D-ribose 1-diphosphate: step 6/9. This is Imidazoleglycerol-phosphate dehydratase (HIS3) from Scheffersomyces stipitis (strain ATCC 58785 / CBS 6054 / NBRC 10063 / NRRL Y-11545) (Yeast).